The following is a 149-amino-acid chain: Large-conductance mechanosensitive channel (149 aa).

A run of 2 helical transmembrane segments spans residues 14-34 and 85-105; these read VVDMAVGIIVGGAFGKLVNTL and GLFINAMISFIIMAFAVYLLV.

The protein belongs to the MscL family. Homopentamer.

It localises to the cell inner membrane. In terms of biological role, channel that opens in response to stretch forces in the membrane lipid bilayer. May participate in the regulation of osmotic pressure changes within the cell. This is Large-conductance mechanosensitive channel from Chlorobium phaeovibrioides (strain DSM 265 / 1930) (Prosthecochloris vibrioformis (strain DSM 265)).